Consider the following 51-residue polypeptide: MTSWPGGSFGPDPLLALLVVILLARLILWSCLGTYIDYRLAQRRPQKPKQD.

Residues 13–33 (PLLALLVVILLARLILWSCLG) traverse the membrane as a helical segment.

Its subcellular location is the membrane. The polypeptide is Small integral membrane protein 38 (Homo sapiens (Human)).